The sequence spans 474 residues: Cysteine--tRNA ligase (474 aa).

A Zn(2+)-binding site is contributed by Cys-27. The 'HIGH' region motif lies at 29-39 (PTVYNYIHIGN). Cys-212, His-237, and Glu-241 together coordinate Zn(2+). The 'KMSKS' region signature appears at 271-275 (KMSKS). Lys-274 lines the ATP pocket.

Belongs to the class-I aminoacyl-tRNA synthetase family. In terms of assembly, monomer. The cofactor is Zn(2+).

It is found in the cytoplasm. The catalysed reaction is tRNA(Cys) + L-cysteine + ATP = L-cysteinyl-tRNA(Cys) + AMP + diphosphate. The sequence is that of Cysteine--tRNA ligase from Lactobacillus delbrueckii subsp. bulgaricus (strain ATCC 11842 / DSM 20081 / BCRC 10696 / JCM 1002 / NBRC 13953 / NCIMB 11778 / NCTC 12712 / WDCM 00102 / Lb 14).